Consider the following 575-residue polypeptide: Isocitrate dehydrogenase kinase/phosphatase (575 aa).

ATP contacts are provided by residues 315–321 (APGVKGM) and Lys-336. Residue Asp-371 is part of the active site.

Belongs to the AceK family.

It localises to the cytoplasm. The enzyme catalyses L-seryl-[isocitrate dehydrogenase] + ATP = O-phospho-L-seryl-[isocitrate dehydrogenase] + ADP + H(+). Functionally, bifunctional enzyme which can phosphorylate or dephosphorylate isocitrate dehydrogenase (IDH) on a specific serine residue. This is a regulatory mechanism which enables bacteria to bypass the Krebs cycle via the glyoxylate shunt in response to the source of carbon. When bacteria are grown on glucose, IDH is fully active and unphosphorylated, but when grown on acetate or ethanol, the activity of IDH declines drastically concomitant with its phosphorylation. The chain is Isocitrate dehydrogenase kinase/phosphatase from Yersinia pseudotuberculosis serotype I (strain IP32953).